Consider the following 296-residue polypeptide: Glycine--tRNA ligase alpha subunit (296 aa).

Belongs to the class-II aminoacyl-tRNA synthetase family. As to quaternary structure, tetramer of two alpha and two beta subunits.

It is found in the cytoplasm. It catalyses the reaction tRNA(Gly) + glycine + ATP = glycyl-tRNA(Gly) + AMP + diphosphate. The protein is Glycine--tRNA ligase alpha subunit of Francisella tularensis subsp. holarctica (strain FTNF002-00 / FTA).